Consider the following 549-residue polypeptide: Hydroxylamine reductase (549 aa).

Residues cysteine 3, cysteine 6, cysteine 15, and cysteine 21 each contribute to the [4Fe-4S] cluster site. Hybrid [4Fe-2O-2S] cluster-binding residues include histidine 244, glutamate 268, cysteine 313, cysteine 405, cysteine 433, cysteine 458, glutamate 492, and lysine 494. The residue at position 405 (cysteine 405) is a Cysteine persulfide.

It belongs to the HCP family. Requires [4Fe-4S] cluster as cofactor. Hybrid [4Fe-2O-2S] cluster serves as cofactor.

The protein localises to the cytoplasm. It carries out the reaction A + NH4(+) + H2O = hydroxylamine + AH2 + H(+). Catalyzes the reduction of hydroxylamine to form NH(3) and H(2)O. In Gloeothece citriformis (strain PCC 7424) (Cyanothece sp. (strain PCC 7424)), this protein is Hydroxylamine reductase.